The following is a 447-amino-acid chain: Argininosuccinate synthase (447 aa).

ATP is bound by residues 17–25 and Ala-43; that span reads AFSGGLDTS. Position 99 (Tyr-99) interacts with L-citrulline. Residues Gly-129 and Thr-131 each coordinate ATP. L-aspartate contacts are provided by Thr-131, Asn-135, and Asp-136. Asn-135 lines the L-citrulline pocket. ATP is bound at residue Asp-136. Residues Arg-139 and Ser-192 each coordinate L-citrulline. Residue Asp-194 participates in ATP binding. L-citrulline contacts are provided by Thr-201, Glu-203, and Glu-280.

Belongs to the argininosuccinate synthase family. Type 2 subfamily. As to quaternary structure, homotetramer.

Its subcellular location is the cytoplasm. It carries out the reaction L-citrulline + L-aspartate + ATP = 2-(N(omega)-L-arginino)succinate + AMP + diphosphate + H(+). It participates in amino-acid biosynthesis; L-arginine biosynthesis; L-arginine from L-ornithine and carbamoyl phosphate: step 2/3. In Janthinobacterium sp. (strain Marseille) (Minibacterium massiliensis), this protein is Argininosuccinate synthase.